The chain runs to 270 residues: Flagellar hook-basal body complex protein FlhO (270 aa).

The protein belongs to the flagella basal body rod proteins family.

Its function is as follows. Not required for motility. The protein is Flagellar hook-basal body complex protein FlhO (flhO) of Bacillus subtilis (strain 168).